The chain runs to 121 residues: Ribosome-binding factor A (121 aa).

The protein belongs to the RbfA family. As to quaternary structure, monomer. Binds 30S ribosomal subunits, but not 50S ribosomal subunits or 70S ribosomes.

Its subcellular location is the cytoplasm. Its function is as follows. One of several proteins that assist in the late maturation steps of the functional core of the 30S ribosomal subunit. Associates with free 30S ribosomal subunits (but not with 30S subunits that are part of 70S ribosomes or polysomes). Required for efficient processing of 16S rRNA. May interact with the 5'-terminal helix region of 16S rRNA. The sequence is that of Ribosome-binding factor A from Lactobacillus helveticus (strain DPC 4571).